Here is a 378-residue protein sequence, read N- to C-terminus: Sphingosine 1-phosphate receptor 3 (378 aa).

Residues 1 to 44 (MATTHAQGHQPVLGNDTLREHYDYVGKLAGRLRDPPEGGTLITT) lie on the Extracellular side of the membrane. N-linked (GlcNAc...) asparagine glycosylation occurs at Asn-15. A helical membrane pass occupies residues 45–65 (ILFLVTCSFIVLENLMVLIAI). At 66–74 (WKNNKFHNR) the chain is on the cytoplasmic side. The helical transmembrane segment at 75–95 (MYFFIGNLALCDLLAGIAYKV) threads the bilayer. At 96 to 115 (NILMSGRKTFSLSPTVWFLR) the chain is on the extracellular side. The helical transmembrane segment at 116 to 136 (EGSMFVALGASTCSLLAIAIE) threads the bilayer. Residues 137-154 (RHLTMIKMRPYDANKKHR) lie on the Cytoplasmic side of the membrane. A helical membrane pass occupies residues 155-175 (VFLLIGMCWLIAFSLGALPIL). At 176–196 (GWNCLENFPDCSTILPLYSKK) the chain is on the extracellular side. A helical transmembrane segment spans residues 197 to 217 (YIAFLISIFTAILVTIVILYA). Over 218–244 (RIYCLVKSSSRRVANHNSERSMALLRT) the chain is Cytoplasmic. A helical membrane pass occupies residues 245–265 (VVIVVSVFIACWSPLFILFLI). Topologically, residues 266 to 281 (DVACRAKECSILFKSQ) are extracellular. The helical transmembrane segment at 282 to 302 (WFIMLAVLNSAMNPVIYTLAS) threads the bilayer. At 303–378 (KEMRRAFFRL…RSFQNGVLCK (76 aa)) the chain is on the cytoplasmic side. Residues 323–354 (TQASPMQPALDPSRSKSSSSNNSSHSPKVKED) form a disordered region. Ser-326 bears the Phosphoserine mark. Low complexity predominate over residues 337–348 (SKSSSSNNSSHS).

Belongs to the G-protein coupled receptor 1 family. In terms of tissue distribution, most abundant in heart, lung, kidney and spleen; low but detectable in brain, thymus, muscle and testis; and nearly undetectable in liver, stomach, and intestine. Expressed in embryonic lung from embryonic day 14-18. Also abundantly detected in embryonic nasal cartilage, sphenoid bone, vena cava, Meckel's cartilage/incisor teeth, genital tubercle and bladder.

The protein resides in the cell membrane. Receptor for the lysosphingolipid sphingosine 1-phosphate (S1P). S1P is a bioactive lysophospholipid that elicits diverse physiological effect on most types of cells and tissues. The chain is Sphingosine 1-phosphate receptor 3 (S1pr3) from Mus musculus (Mouse).